The sequence spans 461 residues: Protein eva-1 (461 aa).

A signal peptide spans 1-22 (MNMHIVSPVLLLFWFGIIVTDG). The 106-residue stretch at 55 to 160 (ACDGERITLS…KYLQMAYGCI (106 aa)) folds into the SUEL-type lectin domain. Residues 370 to 390 (VMCIVLAVSMAAIVVLSACII) form a helical membrane-spanning segment. The disordered stretch occupies residues 397–429 (NKDSSRSSRRSRSRRSLETSKLVSSNYGGSITP). Positions 415-429 (TSKLVSSNYGGSITP) are enriched in polar residues.

The protein belongs to the EVA1 family. As to quaternary structure, interacts with sax-3. Interacts with slt-1. Interacts (via the SUEL-type lectin domain) with madd-4. Interacts (via the transmembrane domain) with unc-40.

The protein localises to the cell membrane. In terms of biological role, acts as a receptor for slt-1. Required for the guidance of the AVM pioneer axon to the ventral nerve cord. Acts as a unc-40 coreceptor to enhance the sensitivity of unc-40 to the madd-4 midline guidance cue to guide muscle arm extensions (muscle arms) and AVM mechanosensory axons towards the dorsoventral midline. The chain is Protein eva-1 (eva-1) from Caenorhabditis elegans.